Consider the following 473-residue polypeptide: Cysteine--tRNA ligase (473 aa).

Cys-33 serves as a coordination point for Zn(2+). The 'HIGH' region signature appears at 35–45 (ATVQGQPHIGH). Zn(2+) contacts are provided by Cys-211, His-236, and Glu-240. The 'KMSKS' region signature appears at 267–271 (KMSKS). Position 270 (Lys-270) interacts with ATP.

The protein belongs to the class-I aminoacyl-tRNA synthetase family. In terms of assembly, monomer. Zn(2+) is required as a cofactor.

The protein resides in the cytoplasm. It catalyses the reaction tRNA(Cys) + L-cysteine + ATP = L-cysteinyl-tRNA(Cys) + AMP + diphosphate. The sequence is that of Cysteine--tRNA ligase from Mycobacterium leprae (strain Br4923).